The sequence spans 501 residues: Ell-associated factor Eaf (501 aa).

2 stretches are compositionally biased toward polar residues: residues 138–149 (NMGQGQLHSQGA) and 173–192 (ENST…SRRN). 2 disordered regions span residues 138-226 (NMGQ…PAWD) and 256-501 (GHAN…DDDD). Composition is skewed to low complexity over residues 200 to 221 (RNSP…SPQS) and 256 to 270 (GHAN…SATG). Position 202 is a phosphoserine (Ser-202). Residues 271-283 (QTDFGSISSSSHI) show a composition bias toward polar residues. Composition is skewed to low complexity over residues 302–314 (QRQS…QQQP) and 329–343 (QQQR…QRPP). The segment covering 393-408 (DSSDSDSGSDSDDSTE) has biased composition (acidic residues). 3 stretches are compositionally biased toward low complexity: residues 416–437 (QQPV…HLNQ), 455–471 (QQQQ…QKQQ), and 483–501 (NDLL…DDDD).

The protein belongs to the EAF family.

The protein resides in the nucleus. Functionally, promotes transcriptional elongation by Su(Tpl)/ELL. Essential for development. The chain is Ell-associated factor Eaf from Drosophila yakuba (Fruit fly).